Consider the following 205-residue polypeptide: MLEARDLHCERDERTLFSGLSFTVDAGEWVQVTGGNGAGKTTLLRLLTGLARPDGGEVYWQGEPLRRVRDSFHRSLLWIGHQPGIKTRLTARENLHFFHPGDGARLPEALAQAGLAGFEDVPVARLSAGQQRRVALARLWLTRAALWVLDEPFTAIDVNGVARLTRRMAAHTAQGGMVILTTHQPLPGAADTVRRLALTGGEAGL.

In terms of domain architecture, ABC transporter spans 2-205 (LEARDLHCER…LALTGGEAGL (204 aa)). 34–41 (GGNGAGKT) provides a ligand contact to ATP.

This sequence belongs to the ABC transporter superfamily. CcmA exporter (TC 3.A.1.107) family. In terms of assembly, the complex is composed of two ATP-binding proteins (CcmA) and two transmembrane proteins (CcmB).

It is found in the cell inner membrane. It carries out the reaction heme b(in) + ATP + H2O = heme b(out) + ADP + phosphate + H(+). In terms of biological role, part of the ABC transporter complex CcmAB involved in the biogenesis of c-type cytochromes; once thought to export heme, this seems not to be the case, but its exact role is uncertain. Responsible for energy coupling to the transport system. This is Cytochrome c biogenesis ATP-binding export protein CcmA 2 from Salmonella paratyphi A (strain ATCC 9150 / SARB42).